A 100-amino-acid polypeptide reads, in one-letter code: Urease subunit gamma (100 aa).

This sequence belongs to the urease gamma subunit family. Heterotrimer of UreA (gamma), UreB (beta) and UreC (alpha) subunits. Three heterotrimers associate to form the active enzyme.

The protein resides in the cytoplasm. It carries out the reaction urea + 2 H2O + H(+) = hydrogencarbonate + 2 NH4(+). It participates in nitrogen metabolism; urea degradation; CO(2) and NH(3) from urea (urease route): step 1/1. This Escherichia coli protein is Urease subunit gamma.